A 294-amino-acid polypeptide reads, in one-letter code: ATP phosphoribosyltransferase (294 aa).

It belongs to the ATP phosphoribosyltransferase family. Long subfamily. Mg(2+) is required as a cofactor.

Its subcellular location is the cytoplasm. It carries out the reaction 1-(5-phospho-beta-D-ribosyl)-ATP + diphosphate = 5-phospho-alpha-D-ribose 1-diphosphate + ATP. Its pathway is amino-acid biosynthesis; L-histidine biosynthesis; L-histidine from 5-phospho-alpha-D-ribose 1-diphosphate: step 1/9. Feedback inhibited by histidine. Functionally, catalyzes the condensation of ATP and 5-phosphoribose 1-diphosphate to form N'-(5'-phosphoribosyl)-ATP (PR-ATP). Has a crucial role in the pathway because the rate of histidine biosynthesis seems to be controlled primarily by regulation of HisG enzymatic activity. The polypeptide is ATP phosphoribosyltransferase (Chlorobium luteolum (strain DSM 273 / BCRC 81028 / 2530) (Pelodictyon luteolum)).